We begin with the raw amino-acid sequence, 658 residues long: Interferon-induced GTP-binding protein Mx1 (658 aa).

At M1 the chain carries N-acetylmethionine. Residues 1-20 (MVNSKGKITDSDPGSSHLLL) are disordered. Positions 65–338 (DLALPAIAVI…LITHICKTLP (274 aa)) constitute a Dynamin-type G domain. The tract at residues 75–82 (GDQSSGKS) is G1 motif. 75–82 (GDQSSGKS) contacts GTP. The tract at residues 100–102 (VTR) is G2 motif. The interval 176–179 (DLPG) is G3 motif. GTP-binding positions include 176–180 (DLPGI) and 245–248 (TKPD). The tract at residues 245–248 (TKPD) is G4 motif. The segment at 277–280 (KCRG) is G5 motif. Residues 339–364 (LLENQIKENYEKITEELQKYGSDVPE) form a bundle signaling element (BSE) region. The middle domain stretch occupies residues 364–531 (EEEHEKMFFL…HFQMEQIVYC (168 aa)). Residues 365 to 628 (EEHEKMFFLI…KDTHNWLLKE (264 aa)) are stalk. Positions 551–554 (KDRK) are critical for lipid-binding. Residues 570-658 (LSDIFEHLLA…ARRRLAKFPG (89 aa)) enclose the GED domain.

It belongs to the TRAFAC class dynamin-like GTPase superfamily. Dynamin/Fzo/YdjA family. As to quaternary structure, homooligomer. Oligomerizes into multimeric filamentous or ring-like structures by virtue of its stalk domain. Oligomerization is critical for GTPase activity, protein stability, and recognition of viral target structures. Interacts with TRPC1, TRPC3, TRPC4, TRPC5, TRPC6 and TRPC7. Interacts with HSPA5. Interacts with TUBB/TUBB5. Interacts with DDX39A and DDX39B. ISGylated.

It localises to the cytoplasm. It is found in the endoplasmic reticulum membrane. The protein resides in the perinuclear region. Functionally, interferon-induced dynamin-like GTPase with antiviral activity. This chain is Interferon-induced GTP-binding protein Mx1 (MX1), found in Eumetopias jubatus (Steller sea lion).